The primary structure comprises 201 residues: Ras-related protein Rab-1B (201 aa).

At methionine 1 the chain carries N-acetylmethionine. GTP is bound by residues serine 17, glycine 18, valine 19, glycine 20, lysine 21, serine 22, cysteine 23, tyrosine 33, threonine 34, glutamate 35, serine 36, serine 39, and threonine 40. Position 22 (serine 22) interacts with Mg(2+). A Switch 1 motif is present at residues 30 to 45 (DDTYTESYISTIGVDF). The Mg(2+) site is built by threonine 40 and aspartate 63. The switch 2 region; required for interaction with REP1/CHM stretch occupies residues 64–83 (TAGQERFRTITSSYYRGAHG). Positions 65–80 (AGQERFRTITSSYYRG) match the Switch 2 motif. GTP is bound by residues glycine 66, asparagine 121, lysine 122, aspartate 124, serine 151, alanine 152, and lysine 153. The tract at residues 174–201 (GPGAASGGERPNLKIDSTPVKPAGGGCC) is disordered. 2 S-geranylgeranyl cysteine lipidation sites follow: cysteine 200 and cysteine 201. Cysteine 201 bears the Cysteine methyl ester mark.

Belongs to the small GTPase superfamily. Rab family. As to quaternary structure, interacts with MICAL1 and MICAL2. Interacts (in GTP-bound form) with MICALCL, MICAL1 and MILCAL3. Interacts with GDI1; the interaction requires the GDP-bound state. Interacts with CHM/REP1; the interaction requires the GDP-bound form and is necessary for prenylation by GGTase II. Interacts with RabGAP TBC1D20. Interacts (in GDP-bound form) with lipid phosphatase MTMR6 (via GRAM domain); the interaction regulates MTMR6 recruitment to the endoplasmic reticulum-Golgi intermediate compartment. Interacts (in GDP-bound form) with lipid phosphatase MTMR7. The cofactor is Mg(2+). In terms of processing, prenylated; by GGTase II, only after interaction of the substrate with Rab escort protein 1 (REP1).

Its subcellular location is the cytoplasm. The protein localises to the membrane. It localises to the preautophagosomal structure membrane. It is found in the perinuclear region. The enzyme catalyses GTP + H2O = GDP + phosphate + H(+). Regulated by guanine nucleotide exchange factors (GEFs) which promote the exchange of bound GDP for free GTP. Regulated by GTPase activating proteins (GAPs) including TBC1D20 which increases the GTP hydrolysis activity. Inhibited by GDP dissociation inhibitors (GDIs). Its function is as follows. The small GTPases Rab are key regulators of intracellular membrane trafficking, from the formation of transport vesicles to their fusion with membranes. Rabs cycle between an inactive GDP-bound form and an active GTP-bound form that is able to recruit to membranes different set of downstream effectors directly responsible for vesicle formation, movement, tethering and fusion. Plays a role in the initial events of the autophagic vacuole development which take place at specialized regions of the endoplasmic reticulum. Regulates vesicular transport between the endoplasmic reticulum and successive Golgi compartments. Required to modulate the compacted morphology of the Golgi. Promotes the recruitment of lipid phosphatase MTMR6 to the endoplasmic reticulum-Golgi intermediate compartment. The polypeptide is Ras-related protein Rab-1B (RAB1B) (Macaca fascicularis (Crab-eating macaque)).